Here is an 806-residue protein sequence, read N- to C-terminus: Xylosyltransferase sqv-6 (806 aa).

The Cytoplasmic segment spans residues 1 to 11 (MLFNGTTKYRD). The chain crosses the membrane as a helical; Signal-anchor for type II membrane protein span at residues 12–32 (YAIVISLFFLLNVYLLYNTAQ). Over 33–806 (HTQVGNSKHI…GYDEDTQTLI (774 aa)) the chain is Lumenal. Cysteines 57 and 85 form a disulfide. Asn-89 and Asn-169 each carry an N-linked (GlcNAc...) asparagine glycan. Disulfide bonds link Cys-101–Cys-445, Cys-464–Cys-478, and Cys-466–Cys-476. Positions 109–205 (IDQRIGCFLD…FNAVEIFRTG (97 aa)) constitute a WSC domain. Residues Asp-264 and 293–295 (TIW) contribute to the UDP-alpha-D-xylose site. N-linked (GlcNAc...) asparagine glycosylation is present at Asn-325. 398–399 (DW) serves as a coordination point for UDP-alpha-D-xylose. Residues Ser-479 and 505–506 (RK) contribute to the UDP-alpha-D-xylose site. N-linked (GlcNAc...) asparagine glycans are attached at residues Asn-614, Asn-655, and Asn-719. Cys-772 and Cys-778 form a disulfide bridge.

It belongs to the glycosyltransferase 14 family. XylT subfamily. A divalent metal cation is required as a cofactor.

It localises to the endoplasmic reticulum membrane. The protein resides in the golgi apparatus membrane. The enzyme catalyses UDP-alpha-D-xylose + L-seryl-[protein] = 3-O-(beta-D-xylosyl)-L-seryl-[protein] + UDP + H(+). It participates in glycan metabolism; chondroitin sulfate biosynthesis. Its pathway is glycan metabolism; heparan sulfate biosynthesis. Catalyzes the first step in biosynthesis of glycosaminoglycan. Transfers D-xylose from UDP-D-xylose to specific serine residues of the core protein. Required for vulval morphogenesis and zygotic cytokinesis, suggesting that glycosaminoglycans play a central role in vulval morphogenesis. The sequence is that of Xylosyltransferase sqv-6 from Caenorhabditis elegans.